Here is a 425-residue protein sequence, read N- to C-terminus: Alpha-muurolene synthase (425 aa).

Residues Asp97, Asp101, Asn240, Ser244, and Glu248 each contribute to the Mg(2+) site. The short motif at 97-101 (DNISD) is the DDXXD motif element. The disordered stretch occupies residues 348-382 (VAPPPPPPPPTPPPQSSDADTKKQKVKAQDGKGPV). Over residues 349-362 (APPPPPPPPTPPPQ) the composition is skewed to pro residues. A compositionally biased stretch (basic and acidic residues) spans 366–377 (ADTKKQKVKAQD).

The protein belongs to the terpene synthase family. The cofactor is Mg(2+).

It catalyses the reaction (2E,6E)-farnesyl diphosphate = alpha-muurolene + diphosphate. The enzyme catalyses (2E,6E)-farnesyl diphosphate = gamma-muurolene + diphosphate. The catalysed reaction is (2E,6E)-farnesyl diphosphate = (+)-(R)-germacrene A + diphosphate. In terms of biological role, sesquiterpene synthase that catalyzes the formation of alpha-muurolene, and at lower level (+)-(R)-germacrene A and gamma-muurolene. The protein is Alpha-muurolene synthase (COP3) of Coprinopsis cinerea (strain Okayama-7 / 130 / ATCC MYA-4618 / FGSC 9003) (Inky cap fungus).